The following is a 501-amino-acid chain: Aspartyl/glutamyl-tRNA(Asn/Gln) amidotransferase subunit B (501 aa).

Belongs to the GatB/GatE family. GatB subfamily. In terms of assembly, heterotrimer of A, B and C subunits.

It catalyses the reaction L-glutamyl-tRNA(Gln) + L-glutamine + ATP + H2O = L-glutaminyl-tRNA(Gln) + L-glutamate + ADP + phosphate + H(+). The catalysed reaction is L-aspartyl-tRNA(Asn) + L-glutamine + ATP + H2O = L-asparaginyl-tRNA(Asn) + L-glutamate + ADP + phosphate + 2 H(+). Its function is as follows. Allows the formation of correctly charged Asn-tRNA(Asn) or Gln-tRNA(Gln) through the transamidation of misacylated Asp-tRNA(Asn) or Glu-tRNA(Gln) in organisms which lack either or both of asparaginyl-tRNA or glutaminyl-tRNA synthetases. The reaction takes place in the presence of glutamine and ATP through an activated phospho-Asp-tRNA(Asn) or phospho-Glu-tRNA(Gln). This chain is Aspartyl/glutamyl-tRNA(Asn/Gln) amidotransferase subunit B, found in Mycobacterium sp. (strain KMS).